Consider the following 520-residue polypeptide: GMP synthase [glutamine-hydrolyzing] (520 aa).

Positions 3–200 (AIAIIDFGSQ…FLDIANCKRD (198 aa)) constitute a Glutamine amidotransferase type-1 domain. Cys84 serves as the catalytic Nucleophile. Residues His175 and Glu177 contribute to the active site. The GMPS ATP-PPase domain occupies 201 to 386 (WTMKSFIEEQ…IGLSDEIIFQ (186 aa)). ATP is bound at residue 228 to 234 (SGGVDSS).

As to quaternary structure, homodimer.

The enzyme catalyses XMP + L-glutamine + ATP + H2O = GMP + L-glutamate + AMP + diphosphate + 2 H(+). It functions in the pathway purine metabolism; GMP biosynthesis; GMP from XMP (L-Gln route): step 1/1. Its function is as follows. Catalyzes the synthesis of GMP from XMP. The protein is GMP synthase [glutamine-hydrolyzing] of Wolbachia pipientis wMel.